The chain runs to 619 residues: Chaperone protein HscA homolog (619 aa).

This sequence belongs to the heat shock protein 70 family.

In terms of biological role, chaperone involved in the maturation of iron-sulfur cluster-containing proteins. Has a low intrinsic ATPase activity which is markedly stimulated by HscB. This is Chaperone protein HscA homolog from Pseudomonas aeruginosa (strain UCBPP-PA14).